The following is a 224-amino-acid chain: PKHD-type hydroxylase tll1907 (224 aa).

Positions 77–176 constitute a Fe2OG dioxygenase domain; the sequence is KIIGPLLFSR…RLVAVAWVQS (100 aa). His96, Asp98, and His157 together coordinate Fe cation. Arg167 provides a ligand contact to 2-oxoglutarate.

The cofactor is Fe(2+). L-ascorbate is required as a cofactor.

In Thermosynechococcus vestitus (strain NIES-2133 / IAM M-273 / BP-1), this protein is PKHD-type hydroxylase tll1907.